The sequence spans 244 residues: NAD(P)H-quinone oxidoreductase subunit K (244 aa).

C51, C52, C116, and C147 together coordinate [4Fe-4S] cluster.

The protein belongs to the complex I 20 kDa subunit family. In terms of assembly, NDH-1 can be composed of about 15 different subunits; different subcomplexes with different compositions have been identified which probably have different functions. [4Fe-4S] cluster is required as a cofactor.

The protein localises to the cellular thylakoid membrane. The catalysed reaction is a plastoquinone + NADH + (n+1) H(+)(in) = a plastoquinol + NAD(+) + n H(+)(out). It catalyses the reaction a plastoquinone + NADPH + (n+1) H(+)(in) = a plastoquinol + NADP(+) + n H(+)(out). Functionally, NDH-1 shuttles electrons from an unknown electron donor, via FMN and iron-sulfur (Fe-S) centers, to quinones in the respiratory and/or the photosynthetic chain. The immediate electron acceptor for the enzyme in this species is believed to be plastoquinone. Couples the redox reaction to proton translocation, and thus conserves the redox energy in a proton gradient. Cyanobacterial NDH-1 also plays a role in inorganic carbon-concentration. This chain is NAD(P)H-quinone oxidoreductase subunit K, found in Synechococcus sp. (strain JA-2-3B'a(2-13)) (Cyanobacteria bacterium Yellowstone B-Prime).